The sequence spans 376 residues: Glutamate 5-kinase (376 aa).

Lys18 contacts ATP. Substrate is bound by residues Ser58, Asp145, and Asn157. ATP is bound by residues 177–178 (SD) and 218–224 (TGGMASK). In terms of domain architecture, PUA spans 280-358 (TGALTLDAGA…SELPGELRRP (79 aa)).

Belongs to the glutamate 5-kinase family.

It localises to the cytoplasm. The enzyme catalyses L-glutamate + ATP = L-glutamyl 5-phosphate + ADP. It participates in amino-acid biosynthesis; L-proline biosynthesis; L-glutamate 5-semialdehyde from L-glutamate: step 1/2. Functionally, catalyzes the transfer of a phosphate group to glutamate to form L-glutamate 5-phosphate. The polypeptide is Glutamate 5-kinase (Mycobacterium tuberculosis (strain ATCC 25177 / H37Ra)).